The chain runs to 397 residues: Subtilisin-like protease 3 (397 aa).

The signal sequence occupies residues 1 to 19 (MGCIKVISVFLAAIAAVDA). The propeptide occupies 20-116 (RAFFHNRGGN…VEHDRVVKLA (97 aa)). Residues 35 to 116 (SYIVVMKDGV…VEHDRVVKLA (82 aa)) enclose the Inhibitor I9 domain. Residues 126–397 (TWGLGRVSHK…NRLLYNGSGR (272 aa)) form the Peptidase S8 domain. Residues aspartate 158 and histidine 189 each act as charge relay system in the active site. N-linked (GlcNAc...) asparagine glycosylation occurs at asparagine 250. The active-site Charge relay system is serine 344. Asparagine 393 is a glycosylation site (N-linked (GlcNAc...) asparagine).

The protein belongs to the peptidase S8 family.

The protein localises to the secreted. Secreted subtilisin-like serine protease with keratinolytic activity that contributes to pathogenicity. The protein is Subtilisin-like protease 3 (SUB3) of Arthroderma benhamiae (strain ATCC MYA-4681 / CBS 112371) (Trichophyton mentagrophytes).